A 442-amino-acid chain; its full sequence is Enolase 1 (442 aa).

The binds human collagen stretch occupies residues Lys-73–His-140. Gln-163 is a (2R)-2-phosphoglycerate binding site. Glu-205 serves as the catalytic Proton donor. Asp-242, Glu-290, and Asp-317 together coordinate Mg(2+). Lys-342, Arg-371, Ser-372, and Lys-393 together coordinate (2R)-2-phosphoglycerate. Lys-342 serves as the catalytic Proton acceptor.

The protein belongs to the enolase family. It depends on Mg(2+) as a cofactor.

The protein localises to the cytoplasm. Its subcellular location is the secreted. The protein resides in the cell surface. The catalysed reaction is (2R)-2-phosphoglycerate = phosphoenolpyruvate + H2O. It functions in the pathway carbohydrate degradation; glycolysis; pyruvate from D-glyceraldehyde 3-phosphate: step 4/5. In terms of biological role, catalyzes the reversible conversion of 2-phosphoglycerate (2-PG) into phosphoenolpyruvate (PEP). It is essential for the degradation of carbohydrates via glycolysis. Its function is as follows. 'Moonlights' as a collagen receptor. Binds host (human) collagen, which may contribute to pathogenicity. In Lactiplantibacillus plantarum (strain ATCC BAA-793 / NCIMB 8826 / WCFS1) (Lactobacillus plantarum), this protein is Enolase 1.